Here is a 466-residue protein sequence, read N- to C-terminus: tRNA modification GTPase MnmE (466 aa).

Positions 22, 87, and 126 each coordinate (6S)-5-formyl-5,6,7,8-tetrahydrofolate. The 161-residue stretch at glycine 222 to tyrosine 382 folds into the TrmE-type G domain. A K(+)-binding site is contributed by asparagine 232. Residues asparagine 232 to serine 237, threonine 251 to threonine 257, and aspartate 276 to glycine 279 contribute to the GTP site. Serine 236 lines the Mg(2+) pocket. Positions 251, 253, and 256 each coordinate K(+). A Mg(2+)-binding site is contributed by threonine 257. A (6S)-5-formyl-5,6,7,8-tetrahydrofolate-binding site is contributed by lysine 466.

It belongs to the TRAFAC class TrmE-Era-EngA-EngB-Septin-like GTPase superfamily. TrmE GTPase family. Homodimer. Heterotetramer of two MnmE and two MnmG subunits. K(+) is required as a cofactor.

It localises to the cytoplasm. In terms of biological role, exhibits a very high intrinsic GTPase hydrolysis rate. Involved in the addition of a carboxymethylaminomethyl (cmnm) group at the wobble position (U34) of certain tRNAs, forming tRNA-cmnm(5)s(2)U34. The sequence is that of tRNA modification GTPase MnmE from Heliobacterium modesticaldum (strain ATCC 51547 / Ice1).